The following is a 124-amino-acid chain: U33-theraphotoxin-Cg1a (124 aa).

A signal peptide spans 1-17 (MKFAVAIAFTLLVCVFA). Disulfide bonds link cysteine 26–cysteine 37, cysteine 31–cysteine 51, cysteine 36–cysteine 75, cysteine 61–cysteine 83, and cysteine 77–cysteine 94. Basic and acidic residues predominate over residues 93–108 (RCQEESGKSDKSKESQ). The disordered stretch occupies residues 93-124 (RCQEESGKSDKSKESQGSDESEESEESKESCG). The segment covering 109-118 (GSDESEESEE) has biased composition (acidic residues).

Belongs to the neurotoxin 32 family. Expressed by the venom gland.

The protein localises to the secreted. The polypeptide is U33-theraphotoxin-Cg1a (Chilobrachys guangxiensis (Chinese earth tiger tarantula)).